The primary structure comprises 128 residues: Type III secretion protein HrcQb (128 aa).

Acidic residues predominate over residues 1–21 (MSTEDLYQEDVEMLDDYEDPS). The interval 1–57 (MSTEDLYQEDVEMLDDYEDPSTEQHWSEEDGEPSGYATAEPDDHAAQEEQDEPPALD) is disordered. Residues 50–128 (QDEPPALDSL…LQITRLVTRS (79 aa)) are hrcQb-C. The tract at residues 78 to 81 (RRLD) is dimer-dimer interface.

This sequence belongs to the FliN/MopA/SpaO family. In terms of assembly, homotetramer. The four monomers assemble into two tightly bound homodimers. Interacts with HrcQa.

The protein localises to the cytoplasm. Component of the type III secretion system, which is required for effector protein delivery, parasitism, and pathogenicity. Probably participates in the formation of a C-ring-like assembly along with HrcQa. The polypeptide is Type III secretion protein HrcQb (hrcQb) (Pseudomonas savastanoi pv. phaseolicola (Pseudomonas syringae pv. phaseolicola)).